The primary structure comprises 256 residues: Hydroxyacylglutathione hydrolase (256 aa).

Histidine 57, histidine 59, aspartate 61, histidine 62, histidine 115, aspartate 134, and histidine 172 together coordinate Zn(2+).

It belongs to the metallo-beta-lactamase superfamily. Glyoxalase II family. In terms of assembly, monomer. It depends on Zn(2+) as a cofactor.

The enzyme catalyses an S-(2-hydroxyacyl)glutathione + H2O = a 2-hydroxy carboxylate + glutathione + H(+). Its pathway is secondary metabolite metabolism; methylglyoxal degradation; (R)-lactate from methylglyoxal: step 2/2. Functionally, thiolesterase that catalyzes the hydrolysis of S-D-lactoyl-glutathione to form glutathione and D-lactic acid. In Jannaschia sp. (strain CCS1), this protein is Hydroxyacylglutathione hydrolase.